The following is a 387-amino-acid chain: Succinate--CoA ligase [ADP-forming] subunit beta (387 aa).

Positions 9–244 constitute an ATP-grasp domain; that stretch reads KQLFASYGLP…VSQEDDRENR (236 aa). Residues Lys-46, 53 to 55, Glu-99, Cys-102, and Glu-107 contribute to the ATP site; that span reads GRG. Asn-199 and Asp-213 together coordinate Mg(2+). Substrate contacts are provided by residues Asn-264 and 321–323; that span reads GIV.

It belongs to the succinate/malate CoA ligase beta subunit family. In terms of assembly, heterotetramer of two alpha and two beta subunits. The cofactor is Mg(2+).

The enzyme catalyses succinate + ATP + CoA = succinyl-CoA + ADP + phosphate. It carries out the reaction GTP + succinate + CoA = succinyl-CoA + GDP + phosphate. It participates in carbohydrate metabolism; tricarboxylic acid cycle; succinate from succinyl-CoA (ligase route): step 1/1. Its function is as follows. Succinyl-CoA synthetase functions in the citric acid cycle (TCA), coupling the hydrolysis of succinyl-CoA to the synthesis of either ATP or GTP and thus represents the only step of substrate-level phosphorylation in the TCA. The beta subunit provides nucleotide specificity of the enzyme and binds the substrate succinate, while the binding sites for coenzyme A and phosphate are found in the alpha subunit. The sequence is that of Succinate--CoA ligase [ADP-forming] subunit beta from Legionella pneumophila (strain Corby).